Here is a 1021-residue protein sequence, read N- to C-terminus: Collagen alpha-1(I) chain (1021 aa).

The segment at 1–1021 is disordered; the sequence is DEKSAGGISV…PGPPGPPGPP (1021 aa). Lys-3 carries the allysine modification. Ser-4 carries the post-translational modification Phosphoserine. Residues Pro-23, Pro-26, Pro-29, Pro-38, Pro-41, Pro-44, Pro-59, Pro-74, Pro-80, Pro-89, and Pro-95 each carry the 4-hydroxyproline modification. The segment covering 31-50 has biased composition (low complexity); the sequence is PQGFQGPPGEPGEPGASGPM. The span at 62–76 shows a compositional bias: basic and acidic residues; the sequence is NGDDGEAGKPGRPGE. Lys-98 bears the 5-hydroxylysine; alternate mark. O-linked (Gal...) hydroxylysine; alternate glycosylation occurs at Lys-98. Position 104 is a phosphoserine (Ser-104). Residues 112 to 128 show a composition bias toward low complexity; that stretch reads DAGPAGPKGEPGSPGEN. A 4-hydroxyproline mark is found at Pro-122, Pro-125, Pro-131, Pro-140, Pro-146, Pro-167, Pro-176, Pro-179, Pro-206, Pro-209, Pro-221, Pro-227, Pro-236, Pro-242, Pro-245, and Pro-260. Low complexity predominate over residues 146–164; the sequence is PGASGPAGARGNDGATGAA. Positions 166 to 178 are enriched in pro residues; it reads PPGPTGPAGPPGF. Residues 212–262 show a composition bias toward low complexity; that stretch reads AGAAGPAGNPGADGQPGAKGANGAPGIAGAPGFPGARGPSGPQGPSGAPGP. Residue Lys-263 is modified to 5-hydroxylysine. Residues Pro-269, Pro-272, Pro-284, Pro-293, Pro-308, Pro-314, Pro-323, and Pro-329 each carry the 4-hydroxyproline modification. Residues 318-327 show a composition bias toward gly residues; the sequence is GERGGPGSRG. Lys-338 is modified (5-hydroxylysine). 28 positions are modified to 4-hydroxyproline: Pro-347, Pro-356, Pro-362, Pro-368, Pro-377, Pro-380, Pro-389, Pro-398, Pro-404, Pro-416, Pro-425, Pro-434, Pro-437, Pro-455, Pro-472, Pro-478, Pro-484, Pro-490, Pro-496, Pro-502, Pro-514, Pro-523, Pro-534, Pro-546, Pro-549, Pro-555, Pro-561, and Pro-570. Positions 371 to 425 are enriched in low complexity; it reads KGLTGSPGSPGPDGKTGPPGPAGQDGRPGPAGPPGARGQAGVMGFPGPKGAAGEP. Over residues 484-493 the composition is skewed to low complexity; the sequence is PGEAGKPGEQ. Low complexity predominate over residues 536–558; it reads NDGAKGDAGAPGAPGSQGAPGLQ. A 5-hydroxylysine modification is found at Lys-582. A 4-hydroxyproline mark is found at Pro-588 and Pro-603. Residues 615 to 629 are compositionally biased toward low complexity; the sequence is AGPSGPAGPTGARGA. A Phosphoserine modification is found at Ser-618. 7 positions are modified to 4-hydroxyproline: Pro-630, Pro-636, Pro-639, Pro-648, Pro-654, Pro-681, and Pro-690. Residues 642-672 are compositionally biased toward low complexity; it reads AGFAGPPGADGQPGAKGEPGDAGAKGDAGPS. Lys-693 carries the post-translational modification 5-hydroxylysine. The span at 698–714 shows a compositional bias: low complexity; the sequence is SAGPPGATGFPGAAGRV. A 4-hydroxyproline mark is found at Pro-702 and Pro-708. 3-hydroxyproline is present on Pro-716. 4-hydroxyproline is present on residues Pro-717, Pro-726, Pro-729, Pro-750, Pro-759, Pro-768, Pro-777, Pro-794, Pro-803, Pro-806, Pro-812, Pro-827, Pro-833, Pro-839, Pro-848, and Pro-854. A compositionally biased stretch (low complexity) spans 743–752; it reads ETGPAGRPGE. Low complexity predominate over residues 762–777; sequence SGEKGSPGADGPAGAP. The span at 826–836 shows a compositional bias: pro residues; the sequence is PPGPMGPPGLA. Residues 838 to 853 show a composition bias toward low complexity; sequence PPGEAGREGSPGAEGS. At Lys-863 the chain carries 5-hydroxylysine. A compositionally biased stretch (pro residues) spans 871–886; sequence PGPPGAPGAPGAPGPV. 4-hydroxyproline occurs at positions 874, 877, and 880. Positions 907 to 921 are enriched in low complexity; sequence AGPAGARGPAGPQGP. Over residues 922–936 the composition is skewed to basic and acidic residues; it reads RGDKGETGEQGDRGI. Lys-925 bears the 5-hydroxylysine mark. Lys-937 is subject to 5-hydroxylysine; alternate. An O-linked (Gal...) hydroxylysine; alternate glycan is attached at Lys-937. 4-hydroxyproline occurs at positions 952, 955, 973, and 988. Residues 955–988 are compositionally biased toward low complexity; the sequence is PGEQGPSGASGPAGPRGPPGSAGTPGKDGLNGLP. Pro-993 carries the 3-hydroxyproline modification. Pro-994 carries the 4-hydroxyproline modification. Residues 1006-1021 show a composition bias toward pro residues; sequence VGPPGPPGPPGPPGPP. At Pro-1008 the chain carries 3-hydroxyproline. A 4-hydroxyproline modification is found at Pro-1009. 3-hydroxyproline is present on Pro-1011. Pro-1012 bears the 4-hydroxyproline mark. Pro-1014 carries the 3-hydroxyproline modification. Residues Pro-1015, Pro-1018, and Pro-1021 each carry the 4-hydroxyproline modification.

This sequence belongs to the fibrillar collagen family. In terms of assembly, trimers of one alpha 2(I) and two alpha 1(I) chains. In terms of processing, contains mostly 4-hydroxyproline. Proline residues at the third position of the tripeptide repeating unit (G-X-Y) are hydroxylated in some or all of the chains. Post-translationally, contains 3-hydroxyproline at a few sites. This modification occurs on the first proline residue in the sequence motif Gly-Pro-Hyp, where Hyp is 4-hydroxyproline. Lysine residues at the third position of the tripeptide repeating unit (G-X-Y) are 5-hydroxylated in some or all of the chains. In terms of processing, O-glycosylated on hydroxylated lysine residues. The O-linked glycan consists of a Glc-Gal disaccharide. As to expression, expressed in bones.

Its subcellular location is the secreted. The protein localises to the extracellular space. It localises to the extracellular matrix. Its function is as follows. Type I collagen is a member of group I collagen (fibrillar forming collagen). The protein is Collagen alpha-1(I) chain of Doedicurus sp. (South American giant glyptodont).